The primary structure comprises 183 residues: ATP synthase subunit delta (183 aa).

The protein belongs to the ATPase delta chain family. In terms of assembly, F-type ATPases have 2 components, F(1) - the catalytic core - and F(0) - the membrane proton channel. F(1) has five subunits: alpha(3), beta(3), gamma(1), delta(1), epsilon(1). F(0) has three main subunits: a(1), b(2) and c(10-14). The alpha and beta chains form an alternating ring which encloses part of the gamma chain. F(1) is attached to F(0) by a central stalk formed by the gamma and epsilon chains, while a peripheral stalk is formed by the delta and b chains.

Its subcellular location is the cell inner membrane. In terms of biological role, f(1)F(0) ATP synthase produces ATP from ADP in the presence of a proton or sodium gradient. F-type ATPases consist of two structural domains, F(1) containing the extramembraneous catalytic core and F(0) containing the membrane proton channel, linked together by a central stalk and a peripheral stalk. During catalysis, ATP synthesis in the catalytic domain of F(1) is coupled via a rotary mechanism of the central stalk subunits to proton translocation. Functionally, this protein is part of the stalk that links CF(0) to CF(1). It either transmits conformational changes from CF(0) to CF(1) or is implicated in proton conduction. The sequence is that of ATP synthase subunit delta from Ruthia magnifica subsp. Calyptogena magnifica.